A 283-amino-acid polypeptide reads, in one-letter code: Pantothenate synthetase (283 aa).

Position 30–37 (30–37 (MGNLHSGH)) interacts with ATP. Residue H37 is the Proton donor of the active site. Q61 contacts (R)-pantoate. Q61 provides a ligand contact to beta-alanine. 149–152 (GEKD) is an ATP binding site. Q155 provides a ligand contact to (R)-pantoate. ATP is bound by residues V178 and 186–189 (LSSR).

It belongs to the pantothenate synthetase family. As to quaternary structure, homodimer.

The protein localises to the cytoplasm. The catalysed reaction is (R)-pantoate + beta-alanine + ATP = (R)-pantothenate + AMP + diphosphate + H(+). The protein operates within cofactor biosynthesis; (R)-pantothenate biosynthesis; (R)-pantothenate from (R)-pantoate and beta-alanine: step 1/1. In terms of biological role, catalyzes the condensation of pantoate with beta-alanine in an ATP-dependent reaction via a pantoyl-adenylate intermediate. This is Pantothenate synthetase from Pseudomonas savastanoi pv. phaseolicola (strain 1448A / Race 6) (Pseudomonas syringae pv. phaseolicola (strain 1448A / Race 6)).